The sequence spans 195 residues: Proline-rich protein 3 (195 aa).

Residues 1–29 (MKMNFFNSFPQYGVYILGLNLLLCGVSEG) form the signal peptide.

In terms of tissue distribution, component of the acid-insoluble organic matrix of calcified layers of the shell (at protein level).

The protein localises to the secreted. This chain is Proline-rich protein 3, found in Lottia gigantea (Giant owl limpet).